The primary structure comprises 83 residues: Small ribosomal subunit protein bS20 (83 aa).

Belongs to the bacterial ribosomal protein bS20 family.

Functionally, binds directly to 16S ribosomal RNA. The sequence is that of Small ribosomal subunit protein bS20 from Leuconostoc citreum (strain KM20).